The sequence spans 208 residues: UPF0301 protein MAB_4928c (208 aa).

It belongs to the UPF0301 (AlgH) family.

The chain is UPF0301 protein MAB_4928c from Mycobacteroides abscessus (strain ATCC 19977 / DSM 44196 / CCUG 20993 / CIP 104536 / JCM 13569 / NCTC 13031 / TMC 1543 / L948) (Mycobacterium abscessus).